The chain runs to 202 residues: MPKLGMQPIRRRQLIQATLETIDDVGLADATIARIAKRAGVSAGIISHYFGGKDGLLESAMRQILWDLGDAVARRRAQGVESPREHIRAIIDGNFDRSQVNKTVMKTWLAFWSVSMHRPDLQRLQRVNDRWLYSNLCHHFRRCLPRPEAQQAARGLAAMIDGLWLRGALAPQGIDVDRARQLAYDYVEEQLARSTSHAPTDA.

One can recognise an HTH tetR-type domain in the interval 8-68 (PIRRRQLIQA…SAMRQILWDL (61 aa)). The segment at residues 31–50 (TIARIAKRAGVSAGIISHYF) is a DNA-binding region (H-T-H motif).

It participates in amine and polyamine biosynthesis; betaine biosynthesis via choline pathway [regulation]. Functionally, repressor involved in the biosynthesis of the osmoprotectant glycine betaine. It represses transcription of the choline transporter BetT and the genes of BetAB involved in the synthesis of glycine betaine. The protein is HTH-type transcriptional regulator BetI 1 of Chromohalobacter salexigens (strain ATCC BAA-138 / DSM 3043 / CIP 106854 / NCIMB 13768 / 1H11).